The chain runs to 953 residues: Pyruvate, phosphate dikinase, chloroplastic (953 aa).

A chloroplast-targeting transit peptide spans 1 to 77; it reads MMSSLSVEGM…VLNPVSPPVT (77 aa). The tract at residues 55 to 74 is disordered; it reads PELRSSGLTPPRAVLNPVSP. The residue at position 533 (threonine 533) is a Phosphothreonine; by PDRP1. The Tele-phosphohistidine intermediate role is filled by histidine 535. 7 residues coordinate substrate: arginine 641, arginine 698, glutamate 827, glycine 848, threonine 849, asparagine 850, and aspartate 851. Glutamate 827 provides a ligand contact to Mg(2+). Position 851 (aspartate 851) interacts with Mg(2+). Residue cysteine 913 is the Proton donor of the active site.

It belongs to the PEP-utilizing enzyme family. In terms of assembly, homotetramer. Requires Mg(2+) as cofactor. Post-translationally, phosphorylation of Thr-533 in the dark inactivates the enzyme. Dephosphorylation upon light stimulation reactivates the enzyme.

The protein resides in the plastid. It is found in the chloroplast. The enzyme catalyses pyruvate + phosphate + ATP = phosphoenolpyruvate + AMP + diphosphate + H(+). It functions in the pathway photosynthesis; C4 acid pathway. With respect to regulation, activated by light-induced dephosphorylation. Inhibited by dark-induced phosphorylation. Both reactions are catalyzed by PDRP1. Inactivated by cold due to the dissociation of the homotetramer. Formation of phosphoenolpyruvate, which is the primary acceptor of CO(2) in C4 and some Crassulacean acid metabolism plants. In Flaveria bidentis (Coastal plain yellowtops), this protein is Pyruvate, phosphate dikinase, chloroplastic.